We begin with the raw amino-acid sequence, 102 residues long: Small ribosomal subunit protein uS10 (102 aa).

The protein belongs to the universal ribosomal protein uS10 family. Part of the 30S ribosomal subunit.

In terms of biological role, involved in the binding of tRNA to the ribosomes. The protein is Small ribosomal subunit protein uS10 of Staphylococcus saprophyticus subsp. saprophyticus (strain ATCC 15305 / DSM 20229 / NCIMB 8711 / NCTC 7292 / S-41).